The following is a 155-amino-acid chain: Aspartate carbamoyltransferase regulatory chain (155 aa).

Zn(2+)-binding residues include Cys113, Cys118, Cys139, and Cys142.

This sequence belongs to the PyrI family. In terms of assembly, contains catalytic and regulatory chains. The cofactor is Zn(2+).

Functionally, involved in allosteric regulation of aspartate carbamoyltransferase. This chain is Aspartate carbamoyltransferase regulatory chain, found in Methanosphaerula palustris (strain ATCC BAA-1556 / DSM 19958 / E1-9c).